A 391-amino-acid polypeptide reads, in one-letter code: 8-amino-7-oxononanoate synthase (391 aa).

Arg-24 is a substrate binding site. 112-113 (GY) is a pyridoxal 5'-phosphate binding site. Substrate is bound at residue His-137. Pyridoxal 5'-phosphate contacts are provided by Ser-183, His-211, and Thr-240. An N6-(pyridoxal phosphate)lysine modification is found at Lys-243. Position 357 (Thr-357) interacts with substrate.

Belongs to the class-II pyridoxal-phosphate-dependent aminotransferase family. BioF subfamily. In terms of assembly, homodimer. The cofactor is pyridoxal 5'-phosphate.

It catalyses the reaction 6-carboxyhexanoyl-[ACP] + L-alanine + H(+) = (8S)-8-amino-7-oxononanoate + holo-[ACP] + CO2. It functions in the pathway cofactor biosynthesis; biotin biosynthesis. In terms of biological role, catalyzes the decarboxylative condensation of pimeloyl-[acyl-carrier protein] and L-alanine to produce 8-amino-7-oxononanoate (AON), [acyl-carrier protein], and carbon dioxide. The chain is 8-amino-7-oxononanoate synthase from Alkalilimnicola ehrlichii (strain ATCC BAA-1101 / DSM 17681 / MLHE-1).